A 356-amino-acid polypeptide reads, in one-letter code: Protein U8 (356 aa).

This sequence belongs to the herpesviridae US22 family.

The sequence is that of Protein U8 (U8) from Homo sapiens (Human).